We begin with the raw amino-acid sequence, 937 residues long: Coiled-coil domain-containing protein 39 (937 aa).

4 coiled-coil regions span residues 16-137, 165-339, 365-615, and 664-816; these read AIPV…CQMN, QQDD…KKDI, EKTL…SQIR, and VIKA…LKQT. The disordered stretch occupies residues 866-937; it reads LPTARGPSSR…NIPKEKKLSK (72 aa). The span at 873 to 887 shows a compositional bias: low complexity; that stretch reads SSRSSSQSSSLSSFR. Residues S888 and S896 each carry the phosphoserine modification. Over residues 915–928 the composition is skewed to low complexity; that stretch reads NDSSRSASSGSNSN.

Belongs to the CCDC39 family. As to expression, strongly expressed in tissues rich in ciliated cells. Expressed in olfactory and vomeronasal sensory neurons and the respiratory epithelium. Expressed in node cells carrying motile cilia, in upper and lower airways, and in ependymal and choroid plexus cells.

It localises to the cytoplasm. The protein localises to the cytoskeleton. It is found in the cilium axoneme. Its function is as follows. Required for assembly of dynein regulatory complex (DRC) and inner dynein arm (IDA) complexes, which are responsible for ciliary beat regulation, thereby playing a central role in motility in cilia and flagella. Probably acts together with CCDC40 to form a molecular ruler that determines the 96 nanometer (nm) repeat length and arrangements of components in cilia and flagella. Not required for outer dynein arm complexes assembly. The protein is Coiled-coil domain-containing protein 39 of Mus musculus (Mouse).